Reading from the N-terminus, the 760-residue chain is E4 SUMO-protein ligase PIAL2 (760 aa).

An interacting domain (IND), required for interaction with MOM1 and PIAL1 region spans residues Ile-143–Asp-301. The segment at Pro-298–His-379 adopts an SP-RING-type zinc-finger fold. The Zn(2+) site is built by Cys-329, His-331, Cys-352, and Cys-355. The span at Gly-440–Cys-450 shows a compositional bias: basic and acidic residues. 4 disordered regions span residues Gly-440–Asp-471, Leu-492–Asp-522, Gly-631–Arg-657, and Ser-699–Ser-760. Polar residues-rich tracts occupy residues Leu-492–Pro-518, Gly-631–Gln-653, and Ser-699–Thr-729.

This sequence belongs to the PIAL protein ligase family. Homodimer. Interacts with MOM1 and PIAL1 to form a high molecular mass complex which mediates transcriptional silencing at heterochromatin regions. In terms of tissue distribution, expressed in leaves, stems and flowers, and, at low levels, in siliques and old leaves.

It localises to the nucleus. The protein operates within protein modification; protein sumoylation. Its function is as follows. Together with MOM1 and PIAL1, regulates transcriptional gene silencing (TGS) independently of changes in DNA methylation. E4-type SUMO ligase that promotes SUMO chain formation in a SCE1-dependent manner and thus contributes to a pathway for proteolytic removal of sumoylation substrates. Involved in stress responses and sulfur metabolism. In Arabidopsis thaliana (Mouse-ear cress), this protein is E4 SUMO-protein ligase PIAL2.